Consider the following 191-residue polypeptide: Programmed cell death protein 6 (191 aa).

N-acetylalanine is present on A2. EF-hand domains are found at residues 23-58, 59-89, 90-125, 126-161, and 162-191; these read PDQS…GTWT, PFNP…TGVW, KYIT…FGYR, LSDQ…LQRL, and TDIF…FSIV. Residues D36, D38, S40, V42, and E47 each contribute to the Ca(2+) site. Residues D103, D105, S107, M109, and E114 each coordinate Ca(2+). 4 residues coordinate Mg(2+): D169, D171, D173, and W175.

In terms of assembly, homodimer and heterodimer; heterodimerizes (via the EF-hand 5) with PEF1. Isoform 1 and isoform 2 self-associate; probably forming homodimers. Interacts with CPNE4 (via VWFA domain). Interacts with PDCD6IP; the interaction is calcium-dependent. Interacts with RBM22. Interacts with PLSCR4. Interacts with ANXA7 and TSG101. Interacts with DAPK1. Interacts with SEC31A; the interaction is calcium-dependent and promotes monoubiquitination of SEC31A. Interacts with ANXA11 (via N-terminus); the interaction is calcium-dependent. Interacts with PLSCR3 (via N-terminus); the interaction is calcium-dependent. Interacts with MCOLN1; the interaction is calcium-dependent. Interacts with KDR; the interaction is calcium-dependent. Interacts with HEBP2; the interaction is calcium-dependent. Interacts with TFG. Isoform 1: Interacts with SHISA5, leading to stabilize it. Isoform 2: Does not interact with SHISA5. Isoform 2: Does not interact with PDCD6IP, TSG101, ANXA7 and ANXA11.

It is found in the endoplasmic reticulum membrane. The protein localises to the cytoplasmic vesicle. Its subcellular location is the COPII-coated vesicle membrane. It localises to the cytoplasm. The protein resides in the nucleus. It is found in the endosome. Calcium sensor that plays a key role in processes such as endoplasmic reticulum (ER)-Golgi vesicular transport, endosomal biogenesis or membrane repair. Acts as an adapter that bridges unrelated proteins or stabilizes weak protein-protein complexes in response to calcium: calcium-binding triggers exposure of apolar surface, promoting interaction with different sets of proteins thanks to 3 different hydrophobic pockets, leading to translocation to membranes. Involved in ER-Golgi transport. Regulates ER-Golgi transport by promoting the association between PDCD6IP and TSG101, thereby bridging together the ESCRT-III and ESCRT-I complexes. Together with PEF1, acts as a calcium-dependent adapter for the BCR(KLHL12) complex, a complex involved in ER-Golgi transport by regulating the size of COPII coats. In response to cytosolic calcium increase, the heterodimer formed with PEF1 interacts with, and bridges together the BCR(KLHL12) complex and SEC31 (SEC31A or SEC31B), promoting monoubiquitination of SEC31 and subsequent collagen export, which is required for neural crest specification. Involved in the regulation of the distribution and function of MCOLN1 in the endosomal pathway. Promotes localization and polymerization of TFG at endoplasmic reticulum exit site. Required for T-cell receptor-, Fas-, and glucocorticoid-induced apoptosis. May mediate Ca(2+)-regulated signals along the death pathway: interaction with DAPK1 can accelerate apoptotic cell death by increasing caspase-3 activity. Its role in apoptosis may however be indirect, as suggested by knockout experiments. May inhibit KDR/VEGFR2-dependent angiogenesis; the function involves inhibition of VEGF-induced phosphorylation of the Akt signaling pathway. Its function is as follows. Has a lower Ca(2+) affinity than isoform 1. This Rattus norvegicus (Rat) protein is Programmed cell death protein 6.